The following is a 504-amino-acid chain: Sodium-coupled neutral amino acid transporter 3 (504 aa).

Residue S52 is modified to Phosphoserine; by PKC. N73 carries N-linked (GlcNAc...) asparagine glycosylation. A run of 5 helical transmembrane segments spans residues 82–102, 105–125, 143–163, 186–206, and 212–232; these read GILG…LFLL, VALL…IVGI, AAAL…LYII, MDGN…LALM, and LGYS…AVIY. An intrachain disulfide couples C239 to C275. 2 N-linked (GlcNAc...) asparagine glycosylation sites follow: N247 and N251. Residues 287 to 307 traverse the membrane as a helical segment; that stretch reads AYTIPIMAFAFVCHPEVLPIY. N-linked (GlcNAc...) asparagine glycosylation is present at N323. Helical transmembrane passes span 324–344, 366–386, 408–428, 431–451, and 469–489; these read LSIA…YLTF, ILCV…IVLF, VLIA…APNI, IFGI…PAIF, and ILAL…LSFI.

The protein belongs to the amino acid/polyamine transporter 2 family. Post-translationally, phosphorylation at Ser-52 induces internalization and sequestration into an intracellular reservoir. During dephosphorylation by protein phosphatases, can recycle back to the plasma membrane and regain activity. Prolonged phosphorylation results in its degradation. Highly expressed in liver. Expressed in skeletal muscle. Expressed in kidney, heart and brain. Not detected in gut, lung or spleen. Expressed ubiquitously in hepatocytes in liver whereas in kidney expression is restricted to the medulla. Within brain, expressed in glial cells. In the cerebellum, expressed on Bergmann glial fibers in the molecular layer and astrocytes in the granule layer. Expressed in brain kidney and liver (at protein level). In the adult kidney, highly expressed in the outer strip of the outer medulla and medullary rays penetrating into the kidney cortex (at protein level).

It is found in the cell membrane. The protein resides in the basolateral cell membrane. The catalysed reaction is L-glutamine(out) + Na(+)(out) + H(+)(in) = L-glutamine(in) + Na(+)(in) + H(+)(out). The enzyme catalyses L-asparagine(out) + Na(+)(out) + H(+)(in) = L-asparagine(in) + Na(+)(in) + H(+)(out). It catalyses the reaction L-histidine(out) + Na(+)(out) + H(+)(in) = L-histidine(in) + Na(+)(in) + H(+)(out). Its activity is regulated as follows. L-glutamine efflux and L-glutamine uptake are regulated by CO2/HCO3(-) through SLC4A4 leading to modulation of cytosolic pH and Na(+)concentration. Its function is as follows. Symporter that cotransports specific neutral amino acids and sodium ions, coupled to an H(+) antiporter activity. Mainly participates in the glutamate-GABA-glutamine cycle in brain where it transports L-glutamine from astrocytes in the intercellular space for the replenishment of both neurotransmitters glutamate and gamma-aminobutyric acid (GABA) in neurons. Also functions as the major influx transporter in ganglion cells mediating the uptake of glutamine. The transport activity is specific for L-glutamine, L-histidine and L-asparagine. The transport is electroneutral coupled to the cotransport of 1 Na(+) and the antiport of 1 H(+), pH dependent, saturable, Li(+) tolerant and functions in both direction depending on the concentration gradients of its substrates and cotransported ions. Also mediates an amino acid-gated H(+) conductance that is not stoichiometrically coupled to the amino acid transport but which influences the ionic gradients that drive the amino acid transport. In addition, may play a role in nitrogen metabolism, amino acid homeostasis, glucose metabolism and renal ammoniagenesis. The chain is Sodium-coupled neutral amino acid transporter 3 from Rattus norvegicus (Rat).